The primary structure comprises 549 residues: Glucose-6-phosphate isomerase (549 aa).

Glutamate 355 serves as the catalytic Proton donor. Active-site residues include histidine 387 and lysine 515.

The protein belongs to the GPI family.

It is found in the cytoplasm. The catalysed reaction is alpha-D-glucose 6-phosphate = beta-D-fructose 6-phosphate. It participates in carbohydrate biosynthesis; gluconeogenesis. It functions in the pathway carbohydrate degradation; glycolysis; D-glyceraldehyde 3-phosphate and glycerone phosphate from D-glucose: step 2/4. Catalyzes the reversible isomerization of glucose-6-phosphate to fructose-6-phosphate. The sequence is that of Glucose-6-phosphate isomerase from Pasteurella multocida (strain Pm70).